Consider the following 386-residue polypeptide: Putative 8-amino-7-oxononanoate synthase (386 aa).

A substrate-binding site is contributed by R22. Residue 109–110 coordinates pyridoxal 5'-phosphate; the sequence is GY. H134 provides a ligand contact to substrate. Pyridoxal 5'-phosphate is bound by residues S182, 207–210, and 238–241; these read DEAH and TLSK. K241 is modified (N6-(pyridoxal phosphate)lysine). Residue T356 coordinates substrate.

This sequence belongs to the class-II pyridoxal-phosphate-dependent aminotransferase family. BioF subfamily. Homodimer. The cofactor is pyridoxal 5'-phosphate.

The catalysed reaction is 6-carboxyhexanoyl-[ACP] + L-alanine + H(+) = (8S)-8-amino-7-oxononanoate + holo-[ACP] + CO2. The protein operates within cofactor biosynthesis; biotin biosynthesis. In terms of biological role, catalyzes the decarboxylative condensation of pimeloyl-[acyl-carrier protein] and L-alanine to produce 8-amino-7-oxononanoate (AON), [acyl-carrier protein], and carbon dioxide. The protein is Putative 8-amino-7-oxononanoate synthase (bioF) of Nostoc sp. (strain PCC 7120 / SAG 25.82 / UTEX 2576).